The sequence spans 431 residues: 3-phosphoshikimate 1-carboxyvinyltransferase (431 aa).

3-phosphoshikimate-binding residues include K21, S22, and R26. Position 21 (K21) interacts with phosphoenolpyruvate. Phosphoenolpyruvate is bound by residues G93 and R122. S167, Q169, D318, and K345 together coordinate 3-phosphoshikimate. Q169 contacts phosphoenolpyruvate. The Proton acceptor role is filled by D318. The phosphoenolpyruvate site is built by R349 and R391.

Belongs to the EPSP synthase family. Monomer.

The protein resides in the cytoplasm. The catalysed reaction is 3-phosphoshikimate + phosphoenolpyruvate = 5-O-(1-carboxyvinyl)-3-phosphoshikimate + phosphate. Its pathway is metabolic intermediate biosynthesis; chorismate biosynthesis; chorismate from D-erythrose 4-phosphate and phosphoenolpyruvate: step 6/7. In terms of biological role, catalyzes the transfer of the enolpyruvyl moiety of phosphoenolpyruvate (PEP) to the 5-hydroxyl of shikimate-3-phosphate (S3P) to produce enolpyruvyl shikimate-3-phosphate and inorganic phosphate. In Roseiflexus castenholzii (strain DSM 13941 / HLO8), this protein is 3-phosphoshikimate 1-carboxyvinyltransferase.